Here is a 244-residue protein sequence, read N- to C-terminus: RAD51-like protein 1 (244 aa).

In terms of assembly, interacts with brc-2 and rad-51.

It is found in the nucleus. In terms of biological role, has a role in the homologous recombination repair (HRR) of genomic DNA during meiosis. Required for rad-51 recruitment onto ssDNA gaps generated at stalled replication fork barriers. This is RAD51-like protein 1 from Caenorhabditis briggsae.